A 396-amino-acid chain; its full sequence is 1-deoxy-D-xylulose 5-phosphate reductoisomerase (396 aa).

Residues Thr-13, Gly-14, Ser-15, Ile-16, and Asn-127 each contribute to the NADPH site. Residue Lys-128 participates in 1-deoxy-D-xylulose 5-phosphate binding. Glu-129 contacts NADPH. Asp-153 contacts Mn(2+). The 1-deoxy-D-xylulose 5-phosphate site is built by Ser-154, Glu-155, Ser-184, and His-207. Glu-155 provides a ligand contact to Mn(2+). Gly-213 contacts NADPH. Residues Ser-220, Asn-225, Lys-226, and Glu-229 each contribute to the 1-deoxy-D-xylulose 5-phosphate site. Glu-229 serves as a coordination point for Mn(2+).

This sequence belongs to the DXR family. It depends on Mg(2+) as a cofactor. Requires Mn(2+) as cofactor.

It catalyses the reaction 2-C-methyl-D-erythritol 4-phosphate + NADP(+) = 1-deoxy-D-xylulose 5-phosphate + NADPH + H(+). Its pathway is isoprenoid biosynthesis; isopentenyl diphosphate biosynthesis via DXP pathway; isopentenyl diphosphate from 1-deoxy-D-xylulose 5-phosphate: step 1/6. In terms of biological role, catalyzes the NADPH-dependent rearrangement and reduction of 1-deoxy-D-xylulose-5-phosphate (DXP) to 2-C-methyl-D-erythritol 4-phosphate (MEP). This is 1-deoxy-D-xylulose 5-phosphate reductoisomerase from Pseudomonas savastanoi pv. phaseolicola (strain 1448A / Race 6) (Pseudomonas syringae pv. phaseolicola (strain 1448A / Race 6)).